A 434-amino-acid chain; its full sequence is Nicotinate phosphoribosyltransferase (434 aa).

At His242 the chain carries Phosphohistidine; by autocatalysis.

This sequence belongs to the NAPRTase family. In terms of processing, transiently phosphorylated on a His residue during the reaction cycle. Phosphorylation strongly increases the affinity for substrates and increases the rate of nicotinate D-ribonucleotide production. Dephosphorylation regenerates the low-affinity form of the enzyme, leading to product release.

The enzyme catalyses nicotinate + 5-phospho-alpha-D-ribose 1-diphosphate + ATP + H2O = nicotinate beta-D-ribonucleotide + ADP + phosphate + diphosphate. It functions in the pathway cofactor biosynthesis; NAD(+) biosynthesis; nicotinate D-ribonucleotide from nicotinate: step 1/1. Functionally, catalyzes the synthesis of beta-nicotinate D-ribonucleotide from nicotinate and 5-phospho-D-ribose 1-phosphate at the expense of ATP. The protein is Nicotinate phosphoribosyltransferase of Brucella canis (strain ATCC 23365 / NCTC 10854 / RM-666).